A 148-amino-acid polypeptide reads, in one-letter code: UPF0178 protein lpg0089 (148 aa).

It belongs to the UPF0178 family.

The chain is UPF0178 protein lpg0089 from Legionella pneumophila subsp. pneumophila (strain Philadelphia 1 / ATCC 33152 / DSM 7513).